A 247-amino-acid polypeptide reads, in one-letter code: AA9 family lytic polysaccharide monooxygenase A (247 aa).

An N-terminal signal peptide occupies residues 1 to 19 (MVRLASLAVLGSVIATASA). Cu(2+) is bound by residues H20 and H100. A disulfide bridge links C60 with C185. H165 contacts O2. Residue Y182 participates in Cu(2+) binding. N193 carries N-linked (GlcNAc...) asparagine glycosylation.

It belongs to the polysaccharide monooxygenase AA9 family. Cu(2+) is required as a cofactor.

It is found in the secreted. It carries out the reaction [(1-&gt;4)-beta-D-glucosyl]n+m + reduced acceptor + O2 = 4-dehydro-beta-D-glucosyl-[(1-&gt;4)-beta-D-glucosyl]n-1 + [(1-&gt;4)-beta-D-glucosyl]m + acceptor + H2O.. Lytic polysaccharide monooxygenase (LPMO) that depolymerizes polysaccharides via the oxidation of scissile alpha- or beta-(1-4)-glycosidic bonds, yielding C4 oxidation products. Catalysis by LPMOs requires the reduction of the active-site copper from Cu(II) to Cu(I) by a reducing agent and H(2)O(2) or O(2) as a cosubstrate. Shows C4-oxidative cleavage of amorphous cellulose and soluble cello-oligosaccharides. Also active on xyloglucan, mixed-linkage beta-glucan, and glucomannan. Not active on crystalline forms of cellulose. Has higher affinity for linear substrates compared to branched substrates. Catalyzes a fast and specific peroxygenase reaction that is at least two orders of magnitude faster than the apparent monooxygenase reaction. In Schizophyllum commune (strain H4-8 / FGSC 9210) (Split gill fungus), this protein is AA9 family lytic polysaccharide monooxygenase A.